Consider the following 460-residue polypeptide: SPbeta prophage-derived uncharacterized protein YopQ (460 aa).

This is SPbeta prophage-derived uncharacterized protein YopQ (yopQ) from Bacillus subtilis (strain 168).